The chain runs to 309 residues: Ferrochelatase (309 aa).

The Fe cation site is built by H185 and E262.

It belongs to the ferrochelatase family.

The protein localises to the cytoplasm. The catalysed reaction is heme b + 2 H(+) = protoporphyrin IX + Fe(2+). It functions in the pathway porphyrin-containing compound metabolism; protoheme biosynthesis; protoheme from protoporphyrin-IX: step 1/1. Functionally, catalyzes the ferrous insertion into protoporphyrin IX. This is Ferrochelatase from Campylobacter jejuni subsp. jejuni serotype O:23/36 (strain 81-176).